The following is a 147-amino-acid chain: Hemoglobin subunit epsilon (147 aa).

A Globin domain is found at 3–147 (HWSAEEKQLI…VAHALPRKYH (145 aa)). Residues His64 and His93 each contribute to the heme b site.

The protein belongs to the globin family. In terms of assembly, heterotetramer of two epsilon chains and two alpha chains. In terms of tissue distribution, red blood cells.

Functionally, beta-type chain found in early embryos. The chain is Hemoglobin subunit epsilon (HBE) from Cairina moschata (Muscovy duck).